The sequence spans 501 residues: Dihydrolipoyl dehydrogenase, mitochondrial (501 aa).

The N-terminal 31 residues, 1 to 31 (MAMANLARRKGYSLLSSETLRYSFSLRSRAF), are a transit peptide targeting the mitochondrion. FAD-binding positions include 67 to 76 (EKRGALGGTC), K85, G149, and 178 to 180 (TGS). C76 and C81 are joined by a disulfide. Residues 215-222 (GAGYIGLE), E238, V272, and G307 contribute to the NAD(+) site. FAD-binding positions include D348 and 354–357 (MLAH). The active-site Proton acceptor is the H480.

This sequence belongs to the class-I pyridine nucleotide-disulfide oxidoreductase family. Homodimer. Requires FAD as cofactor.

It is found in the mitochondrion matrix. The catalysed reaction is N(6)-[(R)-dihydrolipoyl]-L-lysyl-[protein] + NAD(+) = N(6)-[(R)-lipoyl]-L-lysyl-[protein] + NADH + H(+). Functionally, lipoamide dehydrogenase is a component of the glycine cleavage system as well as of the alpha-ketoacid dehydrogenase complexes. The pyruvate dehydrogenase complex contains multiple copies of three enzymatic components: pyruvate dehydrogenase (E1), dihydrolipoamide acetyltransferase (E2) and lipoamide dehydrogenase (E3). The protein is Dihydrolipoyl dehydrogenase, mitochondrial (LPD) of Pisum sativum (Garden pea).